Reading from the N-terminus, the 198-residue chain is Recombination protein RecR (198 aa).

The C4-type zinc-finger motif lies at 57–72; sequence CLNCGCLTDEAACYFC. The Toprim domain maps to 80–175; that stretch reads QIICVTAFPR…QISRLAFGLP (96 aa).

It belongs to the RecR family.

May play a role in DNA repair. It seems to be involved in an RecBC-independent recombinational process of DNA repair. It may act with RecF and RecO. The protein is Recombination protein RecR of Protochlamydia amoebophila (strain UWE25).